The primary structure comprises 21 residues: Nigrocin-2HSa (21 aa).

The cysteines at positions 15 and 21 are disulfide-linked.

Expressed by the skin glands.

It is found in the secreted. Has antibacterial activity against the Gram-positive bacterium S.aureus ATCC 25923 (MIC=56 uM) and the Gram-negative bacterium E.coli ATCC 25726 (MIC=28 uM). This Odorrana hosii (Hose's rock frog) protein is Nigrocin-2HSa.